The primary structure comprises 388 residues: Succinate--CoA ligase [ADP-forming] subunit beta (388 aa).

An ATP-grasp domain is found at 9–244; the sequence is KQLFARYGLP…PSQEDSREAH (236 aa). Residues lysine 46, 53–55, glutamate 99, threonine 102, and glutamate 107 each bind ATP; that span reads GRG. Mg(2+) is bound by residues asparagine 199 and aspartate 213. Residues asparagine 264 and 321–323 each bind substrate; that span reads GIV.

This sequence belongs to the succinate/malate CoA ligase beta subunit family. As to quaternary structure, heterotetramer of two alpha and two beta subunits. Mg(2+) serves as cofactor.

It catalyses the reaction succinate + ATP + CoA = succinyl-CoA + ADP + phosphate. The catalysed reaction is GTP + succinate + CoA = succinyl-CoA + GDP + phosphate. It functions in the pathway carbohydrate metabolism; tricarboxylic acid cycle; succinate from succinyl-CoA (ligase route): step 1/1. In terms of biological role, succinyl-CoA synthetase functions in the citric acid cycle (TCA), coupling the hydrolysis of succinyl-CoA to the synthesis of either ATP or GTP and thus represents the only step of substrate-level phosphorylation in the TCA. The beta subunit provides nucleotide specificity of the enzyme and binds the substrate succinate, while the binding sites for coenzyme A and phosphate are found in the alpha subunit. The chain is Succinate--CoA ligase [ADP-forming] subunit beta from Pectobacterium carotovorum subsp. carotovorum (strain PC1).